A 309-amino-acid polypeptide reads, in one-letter code: tRNA dimethylallyltransferase (309 aa).

Position 9-16 (9-16 (GPTAIGKT)) interacts with ATP. 11-16 (TAIGKT) is a substrate binding site. Interaction with substrate tRNA stretches follow at residues 34 to 37 (DSRQ) and 164 to 168 (QRMMR).

This sequence belongs to the IPP transferase family. As to quaternary structure, monomer. Mg(2+) is required as a cofactor.

It catalyses the reaction adenosine(37) in tRNA + dimethylallyl diphosphate = N(6)-dimethylallyladenosine(37) in tRNA + diphosphate. Its function is as follows. Catalyzes the transfer of a dimethylallyl group onto the adenine at position 37 in tRNAs that read codons beginning with uridine, leading to the formation of N6-(dimethylallyl)adenosine (i(6)A). The protein is tRNA dimethylallyltransferase of Flavobacterium johnsoniae (strain ATCC 17061 / DSM 2064 / JCM 8514 / BCRC 14874 / CCUG 350202 / NBRC 14942 / NCIMB 11054 / UW101) (Cytophaga johnsonae).